The primary structure comprises 455 residues: Glutamyl-tRNA reductase (455 aa).

Residues 49-52 (TCNR), Ser109, 114-116 (EAQ), and Gln120 contribute to the substrate site. Cys50 functions as the Nucleophile in the catalytic mechanism. 190 to 195 (GAGAMG) provides a ligand contact to NADP(+).

Belongs to the glutamyl-tRNA reductase family. In terms of assembly, homodimer.

The enzyme catalyses (S)-4-amino-5-oxopentanoate + tRNA(Glu) + NADP(+) = L-glutamyl-tRNA(Glu) + NADPH + H(+). The protein operates within porphyrin-containing compound metabolism; protoporphyrin-IX biosynthesis; 5-aminolevulinate from L-glutamyl-tRNA(Glu): step 1/2. Functionally, catalyzes the NADPH-dependent reduction of glutamyl-tRNA(Glu) to glutamate 1-semialdehyde (GSA). The polypeptide is Glutamyl-tRNA reductase (Salinispora tropica (strain ATCC BAA-916 / DSM 44818 / JCM 13857 / NBRC 105044 / CNB-440)).